Reading from the N-terminus, the 497-residue chain is tRNA-2-methylthio-N(6)-dimethylallyladenosine synthase (497 aa).

A disordered region spans residues 1-48 (MTGTSNIPTHGKEHKDAPALLPLPAPNTHHTHAAHPGDPSHDRHPSRG). Residues 18-28 (PALLPLPAPNT) are compositionally biased toward low complexity. An MTTase N-terminal domain is found at 48–165 (GKLFIKTHGC…LPDMIRARRE (118 aa)). [4Fe-4S] cluster contacts are provided by Cys57, Cys94, Cys128, Cys202, Cys206, and Cys209. The Radical SAM core domain maps to 188–430 (RAEGPSAFVS…QKHINAYAAD (243 aa)). The 64-residue stretch at 433-496 (KRMIGTVQTV…TNSLRGRVHT (64 aa)) folds into the TRAM domain.

It belongs to the methylthiotransferase family. MiaB subfamily. In terms of assembly, monomer. Requires [4Fe-4S] cluster as cofactor.

The protein resides in the cytoplasm. The enzyme catalyses N(6)-dimethylallyladenosine(37) in tRNA + (sulfur carrier)-SH + AH2 + 2 S-adenosyl-L-methionine = 2-methylsulfanyl-N(6)-dimethylallyladenosine(37) in tRNA + (sulfur carrier)-H + 5'-deoxyadenosine + L-methionine + A + S-adenosyl-L-homocysteine + 2 H(+). Its function is as follows. Catalyzes the methylthiolation of N6-(dimethylallyl)adenosine (i(6)A), leading to the formation of 2-methylthio-N6-(dimethylallyl)adenosine (ms(2)i(6)A) at position 37 in tRNAs that read codons beginning with uridine. The protein is tRNA-2-methylthio-N(6)-dimethylallyladenosine synthase of Xylella fastidiosa (strain M23).